The sequence spans 136 residues: Large-conductance mechanosensitive channel (136 aa).

The next 4 helical transmembrane spans lie at 9-29 (AFASRGNVIDMAVGIIIGAAF), 32-52 (IVSSFVADIIMPPIGIILGGV), 54-74 (FSDLSVVLLAAQGDAPAVVIA), and 79-99 (IQTVIDFTIIAFAIFMGLKAI).

It belongs to the MscL family. Homopentamer.

It is found in the cell inner membrane. Channel that opens in response to stretch forces in the membrane lipid bilayer. May participate in the regulation of osmotic pressure changes within the cell. The chain is Large-conductance mechanosensitive channel from Shewanella oneidensis (strain ATCC 700550 / JCM 31522 / CIP 106686 / LMG 19005 / NCIMB 14063 / MR-1).